A 156-amino-acid polypeptide reads, in one-letter code: Large ribosomal subunit protein uL23 (156 aa).

Positions 1–19 (MAPKAKKEAPAPPKAEAKA) are enriched in basic and acidic residues. Positions 1 to 67 (MAPKAKKEAP…PKYPRKSAPR (67 aa)) are disordered. The residue at position 2 (A2) is a N,N,N-trimethylalanine. K14 participates in a covalent cross-link: Glycyl lysine isopeptide (Lys-Gly) (interchain with G-Cter in SUMO2). A compositionally biased stretch (basic residues) spans 20-67 (KALKAKKAVLKGVHSHKKKKIRTSPTFRRPKTLRLRRQPKYPRKSAPR). The segment at 32–74 (VHSHKKKKIRTSPTFRRPKTLRLRRQPKYPRKSAPRRNKLDHY) is beta-like import receptor binding (BIB) domain. A Citrulline modification is found at R41. S43 bears the Phosphoserine mark. Phosphothreonine is present on T45. K70 carries the N6-acetyllysine modification.

This sequence belongs to the universal ribosomal protein uL23 family. As to quaternary structure, component of the large ribosomal subunit. Interacts with LYAR and GNL2. Interacts with MDM2; this interaction may promote MDM2-mediated p53/TP53 polyubiquitination. Directly interacts (via BIB domain) with IPO5, IPO7, KPNB1 and TNPO1; these interactions are involved in RPL23A nuclear import for the assembly of ribosomal subunits. Interacts with IPO8. In terms of processing, N-terminus is methylated by METTL11A/NTM1. Post-translationally, citrullinated by PADI4.

It is found in the cytoplasm. The protein localises to the nucleus. In terms of biological role, component of the large ribosomal subunit. The ribosome is a large ribonucleoprotein complex responsible for the synthesis of proteins in the cell. Binds a specific region on the 26S rRNA. May promote p53/TP53 degradation possibly through the stimulation of MDM2-mediated TP53 polyubiquitination. The sequence is that of Large ribosomal subunit protein uL23 (RPL23A) from Bos taurus (Bovine).